The sequence spans 296 residues: Glycine--tRNA ligase alpha subunit (296 aa).

Belongs to the class-II aminoacyl-tRNA synthetase family. Tetramer of two alpha and two beta subunits.

The protein localises to the cytoplasm. It carries out the reaction tRNA(Gly) + glycine + ATP = glycyl-tRNA(Gly) + AMP + diphosphate. This Listeria monocytogenes serotype 4b (strain CLIP80459) protein is Glycine--tRNA ligase alpha subunit.